A 161-amino-acid chain; its full sequence is Phosphopantetheine adenylyltransferase (161 aa).

Serine 11 serves as a coordination point for substrate. ATP contacts are provided by residues 11–12 and histidine 19; that span reads SF. Positions 43, 75, and 89 each coordinate substrate. ATP is bound by residues 90–92, glutamate 100, and 125–131; these read GLR and YSFISSS.

The protein belongs to the bacterial CoaD family. In terms of assembly, homohexamer. Mg(2+) serves as cofactor.

The protein localises to the cytoplasm. The enzyme catalyses (R)-4'-phosphopantetheine + ATP + H(+) = 3'-dephospho-CoA + diphosphate. It participates in cofactor biosynthesis; coenzyme A biosynthesis; CoA from (R)-pantothenate: step 4/5. Reversibly transfers an adenylyl group from ATP to 4'-phosphopantetheine, yielding dephospho-CoA (dPCoA) and pyrophosphate. This is Phosphopantetheine adenylyltransferase from Staphylococcus saprophyticus subsp. saprophyticus (strain ATCC 15305 / DSM 20229 / NCIMB 8711 / NCTC 7292 / S-41).